The following is a 295-amino-acid chain: N-acetylmuramic acid 6-phosphate etherase (295 aa).

An SIS domain is found at 55-218; sequence AADALKQGGR…STGAMVKLGK (164 aa). Glu-83 serves as the catalytic Proton donor. The active site involves Glu-114.

This sequence belongs to the GCKR-like family. MurNAc-6-P etherase subfamily. Homodimer.

The enzyme catalyses N-acetyl-D-muramate 6-phosphate + H2O = N-acetyl-D-glucosamine 6-phosphate + (R)-lactate. It functions in the pathway amino-sugar metabolism; 1,6-anhydro-N-acetylmuramate degradation. Its pathway is amino-sugar metabolism; N-acetylmuramate degradation. The protein operates within cell wall biogenesis; peptidoglycan recycling. Specifically catalyzes the cleavage of the D-lactyl ether substituent of MurNAc 6-phosphate, producing GlcNAc 6-phosphate and D-lactate. Together with AnmK, is also required for the utilization of anhydro-N-acetylmuramic acid (anhMurNAc) either imported from the medium or derived from its own cell wall murein, and thus plays a role in cell wall recycling. The polypeptide is N-acetylmuramic acid 6-phosphate etherase (Yersinia pseudotuberculosis serotype O:1b (strain IP 31758)).